The primary structure comprises 539 residues: Phosphoenolpyruvate carboxykinase (ATP) (539 aa).

The substrate site is built by Arg64, Tyr206, and Lys212. Residues Lys212, His231, and 247–255 (GLSGTGKTT) contribute to the ATP site. Residues Lys212 and His231 each contribute to the Mn(2+) site. Asp268 lines the Mn(2+) pocket. ATP contacts are provided by residues Glu296, Arg332, 448 to 449 (RI), and Thr454. Arg332 contributes to the substrate binding site.

It belongs to the phosphoenolpyruvate carboxykinase (ATP) family. In terms of assembly, monomer. Mn(2+) serves as cofactor.

The protein resides in the cytoplasm. It carries out the reaction oxaloacetate + ATP = phosphoenolpyruvate + ADP + CO2. Its pathway is carbohydrate biosynthesis; gluconeogenesis. Its function is as follows. Involved in the gluconeogenesis. Catalyzes the conversion of oxaloacetate (OAA) to phosphoenolpyruvate (PEP) through direct phosphoryl transfer between the nucleoside triphosphate and OAA. This chain is Phosphoenolpyruvate carboxykinase (ATP), found in Cronobacter sakazakii (strain ATCC BAA-894) (Enterobacter sakazakii).